Reading from the N-terminus, the 166-residue chain is Small ribosomal subunit protein uS5 (166 aa).

In terms of domain architecture, S5 DRBM spans 11–74 (LQEKLIAVNR…EKARRNMITV (64 aa)).

The protein belongs to the universal ribosomal protein uS5 family. Part of the 30S ribosomal subunit. Contacts proteins S4 and S8.

In terms of biological role, with S4 and S12 plays an important role in translational accuracy. Functionally, located at the back of the 30S subunit body where it stabilizes the conformation of the head with respect to the body. The chain is Small ribosomal subunit protein uS5 from Histophilus somni (strain 2336) (Haemophilus somnus).